The following is a 331-amino-acid chain: Quinone oxidoreductase (331 aa).

Residue A2 is modified to N-acetylalanine. N6-acetyllysine is present on K23. At S35 the chain carries Phosphoserine. Residues Y53, 158–161, and G181 contribute to the NADP(+) site; that span reads SGGV. An N6-acetyllysine modification is found at K186. NADP(+) contacts are provided by residues H200, N231, 248–251, and 271–273; these read VGCR and VSL. Residue K298 is modified to N6-succinyllysine.

Belongs to the zinc-containing alcohol dehydrogenase family. Quinone oxidoreductase subfamily. As to quaternary structure, homotetramer.

It localises to the cytoplasm. The catalysed reaction is 2 a quinone + NADPH + H(+) = 2 a 1,4-benzosemiquinone + NADP(+). In terms of biological role, does not have alcohol dehydrogenase activity. Binds NADP and acts through a one-electron transfer process. Orthoquinones, such as 1,2-naphthoquinone or 9,10-phenanthrenequinone, are the best substrates (in vitro). May act in the detoxification of xenobiotics. Interacts with (AU)-rich elements (ARE) in the 3'-UTR of target mRNA species and enhances their stability. NADPH binding interferes with mRNA binding. In Mus musculus (Mouse), this protein is Quinone oxidoreductase (Cryz).